The chain runs to 347 residues: GMP reductase (347 aa).

An NADP(+)-binding site is contributed by 108-131 (ADFQKTKDIMALTEDLIFICIDIA). G181 and G183 together coordinate K(+). Catalysis depends on C186, which acts as the Thioimidate intermediate. 216 to 239 (IIGDGGCSCAGDVSKAFGGGADFV) is a binding site for NADP(+).

Belongs to the IMPDH/GMPR family. GuaC type 1 subfamily. Homotetramer.

It carries out the reaction IMP + NH4(+) + NADP(+) = GMP + NADPH + 2 H(+). In terms of biological role, catalyzes the irreversible NADPH-dependent deamination of GMP to IMP. It functions in the conversion of nucleobase, nucleoside and nucleotide derivatives of G to A nucleotides, and in maintaining the intracellular balance of A and G nucleotides. The chain is GMP reductase from Photobacterium profundum (strain SS9).